A 289-amino-acid polypeptide reads, in one-letter code: Phosphatidylserine decarboxylase proenzyme (289 aa).

Residues Asp-89, His-146, and Ser-252 each act as charge relay system; for autoendoproteolytic cleavage activity in the active site. The active-site Schiff-base intermediate with substrate; via pyruvic acid; for decarboxylase activity is Ser-252. Ser-252 is modified (pyruvic acid (Ser); by autocatalysis).

It belongs to the phosphatidylserine decarboxylase family. PSD-B subfamily. Prokaryotic type I sub-subfamily. In terms of assembly, heterodimer of a large membrane-associated beta subunit and a small pyruvoyl-containing alpha subunit. Pyruvate serves as cofactor. In terms of processing, is synthesized initially as an inactive proenzyme. Formation of the active enzyme involves a self-maturation process in which the active site pyruvoyl group is generated from an internal serine residue via an autocatalytic post-translational modification. Two non-identical subunits are generated from the proenzyme in this reaction, and the pyruvate is formed at the N-terminus of the alpha chain, which is derived from the carboxyl end of the proenzyme. The autoendoproteolytic cleavage occurs by a canonical serine protease mechanism, in which the side chain hydroxyl group of the serine supplies its oxygen atom to form the C-terminus of the beta chain, while the remainder of the serine residue undergoes an oxidative deamination to produce ammonia and the pyruvoyl prosthetic group on the alpha chain. During this reaction, the Ser that is part of the protease active site of the proenzyme becomes the pyruvoyl prosthetic group, which constitutes an essential element of the active site of the mature decarboxylase.

It localises to the cell membrane. The enzyme catalyses a 1,2-diacyl-sn-glycero-3-phospho-L-serine + H(+) = a 1,2-diacyl-sn-glycero-3-phosphoethanolamine + CO2. It participates in phospholipid metabolism; phosphatidylethanolamine biosynthesis; phosphatidylethanolamine from CDP-diacylglycerol: step 2/2. In terms of biological role, catalyzes the formation of phosphatidylethanolamine (PtdEtn) from phosphatidylserine (PtdSer). This Shewanella putrefaciens (strain CN-32 / ATCC BAA-453) protein is Phosphatidylserine decarboxylase proenzyme.